A 491-amino-acid chain; its full sequence is Ran-binding protein 3-like (491 aa).

The RanBD1 domain maps to 270 to 441 (TFKSVLKFPN…VALRSLAKQG (172 aa)). The segment at 440–468 (QGDGGPAESQSDTALPQLNGESCDEDEDE) is disordered. The segment covering 447–459 (ESQSDTALPQLNG) has biased composition (polar residues).

Interacts with SMAD1, SMAD5 and SMAD8.

It is found in the nucleus. The protein resides in the cytoplasm. Nuclear export factor for BMP-specific SMAD1/5/8 that plays a critical role in terminating BMP signaling and regulating mesenchymal stem cell differentiation by blocking osteoblast differentiation to promote myogenic differention. Directly recognizes dephosphorylated SMAD1/5/8 and mediates their nuclear export in a Ran-dependent manner. This is Ran-binding protein 3-like (Ranbp3l) from Mus musculus (Mouse).